We begin with the raw amino-acid sequence, 674 residues long: CRS2-associated factor 1, chloroplastic (674 aa).

The transit peptide at 1 to 54 (MATARLPSRSFLSPAQQSYPRLPASVRLCLSHHEQPPTGPKRHRRAATSHPAFS) directs the protein to the chloroplast. The disordered stretch occupies residues 31 to 61 (SHHEQPPTGPKRHRRAATSHPAFSAAARGRA). The span at 48-57 (TSHPAFSAAA) shows a compositional bias: low complexity. CRM domains are found at residues 183–279 (EPLT…TRPC) and 301–397 (GGLT…LPPL). The tract at residues 554 to 576 (GLLCLLEQAIHSGRALVLSEDEL) is CRS2 binding.

As to quaternary structure, interacts with CRS2 and RNA. Part of large ribonucleo-protein complexes that include group IIB introns, CRS2 and CAF1.

The protein resides in the plastid. It localises to the chloroplast stroma. In terms of biological role, required for the splicing of group IIB introns in chloroplasts. Forms splicing particles with CRS2. Interacts with RNA and confers intron specificity of the splicing particles. The chain is CRS2-associated factor 1, chloroplastic (CAF1) from Zea mays (Maize).